Here is a 23-residue protein sequence, read N- to C-terminus: Thylakoid lumenal 17.4 kDa protein (23 aa).

Residues 1–23 form a disordered region; sequence ANQRLPPLSNDPDRCERAFVGNT.

The protein localises to the plastid. It is found in the chloroplast thylakoid lumen. The protein is Thylakoid lumenal 17.4 kDa protein of Spinacia oleracea (Spinach).